Consider the following 113-residue polypeptide: Large ribosomal subunit protein uL22 (113 aa).

This sequence belongs to the universal ribosomal protein uL22 family. Part of the 50S ribosomal subunit.

Functionally, this protein binds specifically to 23S rRNA; its binding is stimulated by other ribosomal proteins, e.g. L4, L17, and L20. It is important during the early stages of 50S assembly. It makes multiple contacts with different domains of the 23S rRNA in the assembled 50S subunit and ribosome. In terms of biological role, the globular domain of the protein is located near the polypeptide exit tunnel on the outside of the subunit, while an extended beta-hairpin is found that lines the wall of the exit tunnel in the center of the 70S ribosome. The sequence is that of Large ribosomal subunit protein uL22 from Roseiflexus castenholzii (strain DSM 13941 / HLO8).